Consider the following 295-residue polypeptide: Bifunctional protein FolD (295 aa).

Residues 164–166 (GRS), Ser-193, and Ile-234 contribute to the NADP(+) site.

The protein belongs to the tetrahydrofolate dehydrogenase/cyclohydrolase family. As to quaternary structure, homodimer.

The catalysed reaction is (6R)-5,10-methylene-5,6,7,8-tetrahydrofolate + NADP(+) = (6R)-5,10-methenyltetrahydrofolate + NADPH. The enzyme catalyses (6R)-5,10-methenyltetrahydrofolate + H2O = (6R)-10-formyltetrahydrofolate + H(+). It functions in the pathway one-carbon metabolism; tetrahydrofolate interconversion. Functionally, catalyzes the oxidation of 5,10-methylenetetrahydrofolate to 5,10-methenyltetrahydrofolate and then the hydrolysis of 5,10-methenyltetrahydrofolate to 10-formyltetrahydrofolate. This is Bifunctional protein FolD from Flavobacterium johnsoniae (strain ATCC 17061 / DSM 2064 / JCM 8514 / BCRC 14874 / CCUG 350202 / NBRC 14942 / NCIMB 11054 / UW101) (Cytophaga johnsonae).